We begin with the raw amino-acid sequence, 403 residues long: Solanesyl-diphosphate synthase 2, chloroplastic (403 aa).

The N-terminal 62 residues, 1 to 62, are a transit peptide targeting the chloroplast; it reads MLSVSCPRVY…QPGLAAVDVP (62 aa). The isopentenyl diphosphate site is built by lysine 123, arginine 126, and histidine 161. 2 residues coordinate Mg(2+): aspartate 168 and aspartate 172. Arginine 177 lines the an all-trans-polyprenyl diphosphate pocket. Residue arginine 178 coordinates isopentenyl diphosphate. Lysine 254, threonine 255, glutamine 292, and lysine 309 together coordinate an all-trans-polyprenyl diphosphate.

Belongs to the FPP/GGPP synthase family. In terms of assembly, homodimer. Interacts with FBN5. The cofactor is Mg(2+). In terms of tissue distribution, expressed in leaves, stems and roots. Highest expression in leaves and roots.

It is found in the plastid. The protein localises to the chloroplast. The catalysed reaction is 7 isopentenyl diphosphate + (2E)-geranyl diphosphate = all-trans-nonaprenyl diphosphate + 7 diphosphate. Its function is as follows. Involved in providing solanesyl diphosphate for plastoquinone-9 (PQ-9) formation. Geranyl diphosphate is the preferred substrate. This Oryza sativa subsp. japonica (Rice) protein is Solanesyl-diphosphate synthase 2, chloroplastic.